A 153-amino-acid chain; its full sequence is MTTMAKKSLQLGRAVEWPHTPEEAQLDRVPNPQKGTDYLVRFTVPEFTSLCPVTGQPDFAHLMIDYAPGPWLLESKSLKLYIASFRNHGAFHEDCTVMIGKRIASEIKPKWLRIGGYWYPRGGIPIDVFWQTGRVPKGLWVPEQGVAPYRGRG.

Cys51 serves as the catalytic Thioimide intermediate. Asp58 serves as the catalytic Proton donor. Substrate-binding positions include 73–75 and 92–93; these read LES and HE.

It belongs to the GTP cyclohydrolase I family. QueF type 1 subfamily.

It localises to the cytoplasm. The catalysed reaction is 7-aminomethyl-7-carbaguanine + 2 NADP(+) = 7-cyano-7-deazaguanine + 2 NADPH + 3 H(+). Its pathway is tRNA modification; tRNA-queuosine biosynthesis. Catalyzes the NADPH-dependent reduction of 7-cyano-7-deazaguanine (preQ0) to 7-aminomethyl-7-deazaguanine (preQ1). This Bradyrhizobium diazoefficiens (strain JCM 10833 / BCRC 13528 / IAM 13628 / NBRC 14792 / USDA 110) protein is NADPH-dependent 7-cyano-7-deazaguanine reductase.